We begin with the raw amino-acid sequence, 158 residues long: Protein ORF4 (158 aa).

Its function is as follows. Acts by interacting with multiple viral and host proteins to enhance the activity of viral RNA-dependent RNA polymerase. The protein is Protein ORF4 of Hepatitis E virus genotype 1 (isolate Human/Pakistan/Sar-55) (HEV-1).